The sequence spans 380 residues: Flap endonuclease 1 (380 aa).

The tract at residues 1–104 is N-domain; it reads MGIKGLSQLI…GELTKRAEKR (104 aa). Asp-34 serves as a coordination point for Mg(2+). Positions 47 and 70 each coordinate DNA. The Mg(2+) site is built by Asp-86, Glu-158, Glu-160, Asp-179, and Asp-181. The interval 122-253 is I-domain; it reads DIDKFNRRLV…KKAVELINKH (132 aa). Glu-158 contributes to the DNA binding site. DNA is bound by residues Gly-231 and Asp-233. Residue Asp-233 coordinates Mg(2+). An interaction with PCNA region spans residues 336 to 344; that stretch reads TQGRLDSFF. A disordered region spans residues 342–380; sequence SFFKVLPSTPNPKRKIEDKKTPASKKAKTTGGKPGRKPK. Basic residues predominate over residues 363 to 380; it reads PASKKAKTTGGKPGRKPK.

The protein belongs to the XPG/RAD2 endonuclease family. FEN1 subfamily. Interacts with PCNA. Three molecules of FEN1 bind to one PCNA trimer with each molecule binding to one PCNA monomer. PCNA stimulates the nuclease activity without altering cleavage specificity. Requires Mg(2+) as cofactor. Phosphorylated. Phosphorylation upon DNA damage induces relocalization to the nuclear plasma.

Its subcellular location is the nucleus. It is found in the nucleolus. The protein resides in the nucleoplasm. It localises to the mitochondrion. In terms of biological role, structure-specific nuclease with 5'-flap endonuclease and 5'-3' exonuclease activities involved in DNA replication and repair. During DNA replication, cleaves the 5'-overhanging flap structure that is generated by displacement synthesis when DNA polymerase encounters the 5'-end of a downstream Okazaki fragment. It enters the flap from the 5'-end and then tracks to cleave the flap base, leaving a nick for ligation. Also involved in the long patch base excision repair (LP-BER) pathway, by cleaving within the apurinic/apyrimidinic (AP) site-terminated flap. Acts as a genome stabilization factor that prevents flaps from equilibrating into structures that lead to duplications and deletions. Also possesses 5'-3' exonuclease activity on nicked or gapped double-stranded DNA, and exhibits RNase H activity. Also involved in replication and repair of rDNA and in repairing mitochondrial DNA. The chain is Flap endonuclease 1 from Aedes aegypti (Yellowfever mosquito).